A 189-amino-acid polypeptide reads, in one-letter code: Flavin prenyltransferase UbiX (189 aa).

Residues 10 to 12, S36, 91 to 94, and R126 contribute to the FMN site; these read GAS and STNT. Positions 156 and 172 each coordinate dimethylallyl phosphate.

This sequence belongs to the UbiX/PAD1 family.

The catalysed reaction is dimethylallyl phosphate + FMNH2 = prenylated FMNH2 + phosphate. Functionally, flavin prenyltransferase that catalyzes the synthesis of the prenylated FMN cofactor (prenyl-FMN) for 4-hydroxy-3-polyprenylbenzoic acid decarboxylase UbiD. The prenyltransferase is metal-independent and links a dimethylallyl moiety from dimethylallyl monophosphate (DMAP) to the flavin N5 and C6 atoms of FMN. The sequence is that of Flavin prenyltransferase UbiX from Aquifex aeolicus (strain VF5).